The chain runs to 533 residues: MVRAKRTKRASVTDIYRGCKAAGTCPPDVINKVEHTTIADKILQYGSAGVFFGGLGISTGRGTGGATGYVPLGEGPGVRVGGTPTIVRPGVIPEIIGPTDLIPLDTVRPIDPTAPSIVTGTDSTVDLLPGEIESIAEIHPVPVDNAVVDTPVVTEGRRGSSAILEVADPSPPMRTRVARTQYHNPAFQIISESTPMSGESSLADHIIVFEGSGGQLVGGPRESYTASSENIELQEFPSRYSFEIDEGTPPRTSTPVQRAVQSLSSLRRALYNRRLTEQVAVTDPLFLSRPSRLVQFQFDNPAFEDEVTQIFERDLSTVEEPPDRQFLDVQRLSRPLYTETPQGYVRVSRLGRRATIRTRSGAQVGAQVHFYRDLSTINTEEPIEMQLLGEHSGDSTIVQGPVESSIVDVNIDEPDGLEVGRQETPSVEDVDFNSEDLLLDEGVEDFSGSQLVVGTRRSTNTLTVPRFETPRDTSFYIQDIQGYTVSYPESRQTTDIIFPHPDTPTVVIHINDTSGDYYLHPSLQRKKRKRKYL.

Residues 1–10 (MVRAKRTKRA) carry the Nuclear localization signal motif. The cysteines at positions 19 and 25 are disulfide-linked. A Nuclear localization signal motif is present at residues 525 to 532 (RKKRKRKY).

Belongs to the papillomaviridae L2 protein family. Interacts with major capsid protein L1. Interacts with E2; this interaction inhibits E2 transcriptional activity but not the DNA replication function E2. Interacts with host GADD45GIP1. Interacts with host HSPA8; this interaction is required for L2 nuclear translocation. Interacts with host importins KPNB2 and KPNB3. Forms a complex with importin alpha2-beta1 heterodimers via interaction with the importin alpha2 adapter. Interacts with host DYNLT1; this interaction is essential for virus intracellular transport during entry. Interacts (via C-terminus) with host retromer subunits VPS35 and VPS29. Post-translationally, highly phosphorylated.

Its subcellular location is the virion. The protein localises to the host nucleus. It is found in the host early endosome. It localises to the host Golgi apparatus. Functionally, minor protein of the capsid that localizes along the inner surface of the virion, within the central cavities beneath the L1 pentamers. Plays a role in capsid stabilization through interaction with the major capsid protein L1. Once the virion enters the host cell, L2 escorts the genomic DNA into the nucleus by promoting escape from the endosomal compartments and traffic through the host Golgi network. Mechanistically, the C-terminus of L2 possesses a cell-penetrating peptide that protudes from the host endosome, interacts with host cytoplasmic retromer cargo and thereby mediates the capsid delivery to the host trans-Golgi network. Plays a role through its interaction with host dynein in the intracellular microtubule-dependent transport of viral capsid toward the nucleus. Mediates the viral genome import into the nucleus through binding to host importins. Once within the nucleus, L2 localizes viral genomes to host PML bodies in order to activate early gene expression for establishment of infection. Later on, promotes late gene expression by interacting with the viral E2 protein and by inhibiting its transcriptional activation functions. During virion assembly, encapsidates the genome by direct interaction with the viral DNA. This Homo sapiens (Human) protein is Minor capsid protein L2.